Here is a 404-residue protein sequence, read N- to C-terminus: MSFNFCLPNLSFRSSCSSRPCVPSSCCGTTLPGACNIPASVGSCNWFCEGSFNGNEKETMQFLNDRLASYLEKVRQLERENAELERRILERSQQQEPLVCPNYQSYFRTIEELQQKILCGKSENARLVVQIDNAKLASDDFRTKYETEVSLRQLVEADLNGLRRILDELTLCKSDLEARVESLKEELICLKQNHEQEVNTLRSQLGDRLNVEVDAAPTVDLNHVLNETRAQYEALVETNRRDVEEWYIRQTEELNKQVVSSSEQLQSCQAEIIELRRTVNALEVELQAQHNLRDSLENTLTETEARYSCQLNQVQSLIVSVESQLAEIRSDLERQNQEYQVLLDVRARLECEINTYRGLLDSEDCKLPCNPCATTNTCGKPIGPCISNPCVSRTRCGPCNTFVH.

Residues 1–56 (MSFNFCLPNLSFRSSCSSRPCVPSSCCGTTLPGACNIPASVGSCNWFCEGSFNGNE) are head. The IF rod domain occupies 56-367 (EKETMQFLND…GLLDSEDCKL (312 aa)). The interval 57-91 (KETMQFLNDRLASYLEKVRQLERENAELERRILER) is coil 1A. Residues 92-102 (SQQQEPLVCPN) form a linker 1 region. Residues 103-203 (YQSYFRTIEE…HEQEVNTLRS (101 aa)) are coil 1B. Residues 204 to 219 (QLGDRLNVEVDAAPTV) are linker 12. Residues 220–363 (DLNHVLNETR…NTYRGLLDSE (144 aa)) are coil 2. A tail region spans residues 364–404 (DCKLPCNPCATTNTCGKPIGPCISNPCVSRTRCGPCNTFVH).

This sequence belongs to the intermediate filament family.

Functionally, wool microfibrillar keratin. This chain is Keratin, type I microfibrillar, 47.6 kDa, found in Ovis aries (Sheep).